The following is a 126-amino-acid chain: Large ribosomal subunit protein uL22 (126 aa).

This sequence belongs to the universal ribosomal protein uL22 family. Part of the 50S ribosomal subunit.

Its function is as follows. This protein binds specifically to 23S rRNA; its binding is stimulated by other ribosomal proteins, e.g. L4, L17, and L20. It is important during the early stages of 50S assembly. It makes multiple contacts with different domains of the 23S rRNA in the assembled 50S subunit and ribosome. The globular domain of the protein is located near the polypeptide exit tunnel on the outside of the subunit, while an extended beta-hairpin is found that lines the wall of the exit tunnel in the center of the 70S ribosome. The polypeptide is Large ribosomal subunit protein uL22 (Cereibacter sphaeroides (strain ATCC 17029 / ATH 2.4.9) (Rhodobacter sphaeroides)).